A 118-amino-acid chain; its full sequence is Small ribosomal subunit protein uS13 (118 aa).

The segment at 91–118 (HRRGLPVRGQRTKTNARTRKGPRKPIKK) is disordered.

It belongs to the universal ribosomal protein uS13 family. Part of the 30S ribosomal subunit. Forms a loose heterodimer with protein S19. Forms two bridges to the 50S subunit in the 70S ribosome.

Its function is as follows. Located at the top of the head of the 30S subunit, it contacts several helices of the 16S rRNA. In the 70S ribosome it contacts the 23S rRNA (bridge B1a) and protein L5 of the 50S subunit (bridge B1b), connecting the 2 subunits; these bridges are implicated in subunit movement. Contacts the tRNAs in the A and P-sites. In Photorhabdus laumondii subsp. laumondii (strain DSM 15139 / CIP 105565 / TT01) (Photorhabdus luminescens subsp. laumondii), this protein is Small ribosomal subunit protein uS13.